We begin with the raw amino-acid sequence, 349 residues long: Anthranilate phosphoribosyltransferase (349 aa).

Residues Gly82, 85–86, 92–95, 110–118, and Ser122 contribute to the 5-phospho-alpha-D-ribose 1-diphosphate site; these read GD, NVST, and KHGNRAVSG. Anthranilate is bound at residue Gly82. Ser94 lines the Mg(2+) pocket. Asn113 contacts anthranilate. Arg168 lines the anthranilate pocket. Mg(2+) is bound by residues Asp227 and Glu228.

Belongs to the anthranilate phosphoribosyltransferase family. In terms of assembly, homodimer. It depends on Mg(2+) as a cofactor.

It carries out the reaction N-(5-phospho-beta-D-ribosyl)anthranilate + diphosphate = 5-phospho-alpha-D-ribose 1-diphosphate + anthranilate. Its pathway is amino-acid biosynthesis; L-tryptophan biosynthesis; L-tryptophan from chorismate: step 2/5. Catalyzes the transfer of the phosphoribosyl group of 5-phosphorylribose-1-pyrophosphate (PRPP) to anthranilate to yield N-(5'-phosphoribosyl)-anthranilate (PRA). The polypeptide is Anthranilate phosphoribosyltransferase (Pseudomonas entomophila (strain L48)).